Here is a 636-residue protein sequence, read N- to C-terminus: Chaperone protein DnaK (636 aa).

T198 bears the Phosphothreonine; by autocatalysis mark. Residues 600–636 (IAQQQAQAQQGSAEAGAQSQEDDVVDAEFEEVKDDKK) form a disordered region. The span at 601–618 (AQQQAQAQQGSAEAGAQS) shows a compositional bias: low complexity. Residues 619–636 (QEDDVVDAEFEEVKDDKK) show a composition bias toward acidic residues.

Belongs to the heat shock protein 70 family.

Its function is as follows. Acts as a chaperone. In Vibrio vulnificus (strain CMCP6), this protein is Chaperone protein DnaK.